The sequence spans 90 residues: Transcriptional repressor SdpR (90 aa).

The HTH arsR-type domain occupies 1–87; it reads MNNVFKAISD…WMLNFINKGD (87 aa). A DNA-binding region (H-T-H motif) is located at residues 39–62; the sequence is PSISHHLNILKQAEVISDHRKGQF.

It localises to the cytoplasm. Its function is as follows. Represses the transcription of the sdpIR operon and of several other operons that probably contribute to delaying commitment to sporulation. The sequence is that of Transcriptional repressor SdpR (sdpR) from Bacillus subtilis (strain 168).